The primary structure comprises 208 residues: Probable acyl-homoserine-lactone synthase (208 aa).

The protein belongs to the autoinducer synthase family.

The enzyme catalyses a fatty acyl-[ACP] + S-adenosyl-L-methionine = an N-acyl-L-homoserine lactone + S-methyl-5'-thioadenosine + holo-[ACP] + H(+). Functionally, required for the synthesis of OHHL (N-(3-oxooctanoyl)-L-homoserine lactone), an autoinducer molecule which binds to TraR and thus acts in the control of conjugal transfer. The sequence is that of Probable acyl-homoserine-lactone synthase (traI) from Sinorhizobium fredii (strain NBRC 101917 / NGR234).